A 1463-amino-acid polypeptide reads, in one-letter code: Collagen alpha-1(III) chain (1463 aa).

Residues 1 to 23 (MMSFVQCGTWFLLTLLHPSLILA) form the signal peptide. Residues 24–154 (QQSNVDELGC…CPTGGQNYSP (131 aa)) constitute a propeptide, N-terminal propeptide. In terms of domain architecture, VWFC spans 31 to 90 (LGCNYLGQSYESRDVWKPEPCQICVCDSGSVLCDDIMCDDEPLDCPNPEIPFGECCAICP). Residues 97 to 1195 (PVIPDGNRPQ…PGPPGAPGPC (1099 aa)) are disordered. A compositionally biased stretch (polar residues) spans 147–156 (TGGQNYSPQF). The nonhelical region (N-terminal) stretch occupies residues 155–169 (QFDSYDVKSGVGGMG). Residues 164–173 (GVGGMGGYPG) are compositionally biased toward gly residues. The tract at residues 170-1195 (GYPGPAGPPG…PGPPGAPGPC (1026 aa)) is triple-helical region. Pro residues predominate over residues 174–184 (PAGPPGPPGPP). Low complexity predominate over residues 186-198 (SSGHPGSPGSPGY). The segment covering 228-240 (KDGESGRPGRPGE) has biased composition (basic and acidic residues). Over residues 250-259 (KGPAGIPGFP) the composition is skewed to low complexity. A 5-hydroxylysine; alternate modification is found at Lys262. Lys262 is a glycosylation site (O-linked (Gal...) hydroxylysine; alternate). The segment covering 265-276 (RGFDGRNGEKGE) has biased composition (basic and acidic residues). The residue at position 283 (Lys283) is a 5-hydroxylysine. 2 stretches are compositionally biased toward low complexity: residues 310–321 (PGLPGAAGARGN) and 354–379 (PAGS…AGAQ). Over residues 389–398 (GSPGGKGEMG) the composition is skewed to gly residues. 2 stretches are compositionally biased toward low complexity: residues 399-429 (PAGI…QRGP) and 481-502 (PGER…PGEK). Residues 527–548 (GTPGGPGIRGMPGSPGGPGNDG) are compositionally biased toward gly residues. 2 stretches are compositionally biased toward low complexity: residues 606–615 (PAGKNGETGP) and 637–652 (QGLQ…PGEN). A compositionally biased stretch (gly residues) spans 668–677 (GVPGGKGDSG). The segment covering 678–691 (APGERGPPGTAGTP) has biased composition (low complexity). A compositionally biased stretch (gly residues) spans 692–708 (GLRGGAGPPGPEGGKGP). Residues 709–718 (AGPPGPPGTS) are compositionally biased toward pro residues. Basic and acidic residues predominate over residues 822 to 834 (AKGERGAPGEKGE). Over residues 835-849 (GGPPGAAGPPGGSGP) the composition is skewed to gly residues. Residue Lys859 is modified to 5-hydroxylysine. Positions 863 to 879 (GSPGGPGAAGFPGGRGL) are enriched in gly residues. Residues 889-906 (PGPPGPSGAPGKDGPPGP) are compositionally biased toward pro residues. Low complexity-rich tracts occupy residues 907-934 (AGNS…KGPP) and 945-960 (PLGI…LAGP). Lys976 carries the 5-hydroxylysine modification. Residues 1045–1054 (PGHPGPPGPV) are compositionally biased toward pro residues. Over residues 1068 to 1084 (PAGPSGAPGPAGARGAP) the composition is skewed to low complexity. 2 positions are modified to 5-hydroxylysine: Lys1093 and Lys1105. Positions 1120–1132 (PGAAGHQGAVGSP) are enriched in low complexity. Pro residues predominate over residues 1180 to 1192 (PGQPGPPGPPGAP). The propeptide at 1219–1463 (DDPMDFKINT…GVDIGPVCFL (245 aa)) is C-terminal propeptide. The Fibrillar collagen NC1 domain maps to 1229–1463 (EEIMSSLKSV…GVDIGPVCFL (235 aa)). 3 disulfide bridges follow: Cys1259/Cys1291, Cys1299/Cys1461, and Cys1369/Cys1414. Residues Asp1277, Asn1279, Gln1280, Cys1282, and Asp1285 each contribute to the Ca(2+) site.

It belongs to the fibrillar collagen family. In terms of assembly, trimers of identical alpha 1(III) chains. The chains are linked to each other by interchain disulfide bonds. Trimers are also cross-linked via hydroxylysines. Interacts with ADGRG1. Post-translationally, O-glycosylated. In terms of processing, prolines at the third position of the tripeptide repeating unit (G-X-Y) are hydroxylated in some or all of the chains.

It is found in the secreted. It localises to the extracellular space. Its subcellular location is the extracellular matrix. In terms of biological role, collagen type III occurs in most soft connective tissues along with type I collagen. Involved in regulation of cortical development. Is the major ligand of ADGRG1 in the developing brain and binding to ADGRG1 inhibits neuronal migration and activates the RhoA pathway by coupling ADGRG1 to GNA13 and possibly GNA12. The sequence is that of Collagen alpha-1(III) chain (Col3a1) from Rattus norvegicus (Rat).